We begin with the raw amino-acid sequence, 357 residues long: Glucose-6-phosphatase catalytic subunit 1 (357 aa).

Residues methionine 1–aspartate 28 are Lumenal-facing. A helical membrane pass occupies residues tryptophan 29 to isoleucine 49. The Cytoplasmic portion of the chain corresponds to tryptophan 50–lysine 60. The helical transmembrane segment at leucine 61–glycine 81 threads the bilayer. The Lumenal segment spans residues glutamine 82–serine 117. Arginine 83 serves as a coordination point for substrate. Asparagine 96 is a glycosylation site (N-linked (GlcNAc...) asparagine). The helical transmembrane segment at glycine 118–phenylalanine 138 threads the bilayer. The active-site Proton donor is the histidine 119. The Cytoplasmic segment spans residues arginine 139–arginine 147. A helical membrane pass occupies residues phenylalanine 148–leucine 168. The Lumenal segment spans residues serine 169 to arginine 170. Position 170 (arginine 170) interacts with substrate. A helical membrane pass occupies residues isoleucine 171 to valine 191. The Nucleophile role is filled by histidine 176. Over alanine 192–tyrosine 209 the chain is Cytoplasmic. A helical transmembrane segment spans residues phenylalanine 210 to leucine 230. Over glycine 231 to aspartate 254 the chain is Lumenal. The helical transmembrane segment at threonine 255–leucine 275 threads the bilayer. At asparagine 276–tryptophan 291 the chain is on the cytoplasmic side. Residues phenylalanine 292–leucine 312 form a helical membrane-spanning segment. Over lysine 313 to leucine 320 the chain is Lumenal. A helical transmembrane segment spans residues isoleucine 321–isoleucine 341. Residues proline 342–leucine 357 lie on the Cytoplasmic side of the membrane. Positions lysine 354–leucine 357 match the Prevents secretion from ER motif.

Belongs to the glucose-6-phosphatase family.

It localises to the endoplasmic reticulum membrane. It catalyses the reaction D-glucose 6-phosphate + H2O = D-glucose + phosphate. It functions in the pathway carbohydrate biosynthesis; gluconeogenesis. Hydrolyzes glucose-6-phosphate to glucose in the endoplasmic reticulum. Forms with the glucose-6-phosphate transporter (SLC37A4/G6PT) the complex responsible for glucose production in the terminal step of glycogenolysis and gluconeogenesis. Hence, it is the key enzyme in homeostatic regulation of blood glucose levels. The chain is Glucose-6-phosphatase catalytic subunit 1 (G6PC1) from Canis lupus familiaris (Dog).